We begin with the raw amino-acid sequence, 70 residues long: Small ribosomal subunit protein bS21 (70 aa).

The protein belongs to the bacterial ribosomal protein bS21 family.

The sequence is that of Small ribosomal subunit protein bS21 from Polaromonas naphthalenivorans (strain CJ2).